An 83-amino-acid polypeptide reads, in one-letter code: Small ribosomal subunit protein bS20 (83 aa).

This sequence belongs to the bacterial ribosomal protein bS20 family.

Binds directly to 16S ribosomal RNA. The chain is Small ribosomal subunit protein bS20 from Leuconostoc mesenteroides subsp. mesenteroides (strain ATCC 8293 / DSM 20343 / BCRC 11652 / CCM 1803 / JCM 6124 / NCDO 523 / NBRC 100496 / NCIMB 8023 / NCTC 12954 / NRRL B-1118 / 37Y).